Reading from the N-terminus, the 474-residue chain is Bifunctional protein HldE (474 aa).

The tract at residues 1–317 is ribokinase; that stretch reads MKLSMPRFDR…RRAVQREQGS (317 aa). 194 to 197 lines the ATP pocket; sequence NLAE. Asp-263 is a catalytic residue. The cytidylyltransferase stretch occupies residues 343 to 474; that stretch reads FTNGCFDILH…GIVEKIRRQP (132 aa).

In the N-terminal section; belongs to the carbohydrate kinase PfkB family. The protein in the C-terminal section; belongs to the cytidylyltransferase family. In terms of assembly, homodimer.

The catalysed reaction is D-glycero-beta-D-manno-heptose 7-phosphate + ATP = D-glycero-beta-D-manno-heptose 1,7-bisphosphate + ADP + H(+). It catalyses the reaction D-glycero-beta-D-manno-heptose 1-phosphate + ATP + H(+) = ADP-D-glycero-beta-D-manno-heptose + diphosphate. Its pathway is nucleotide-sugar biosynthesis; ADP-L-glycero-beta-D-manno-heptose biosynthesis; ADP-L-glycero-beta-D-manno-heptose from D-glycero-beta-D-manno-heptose 7-phosphate: step 1/4. It functions in the pathway nucleotide-sugar biosynthesis; ADP-L-glycero-beta-D-manno-heptose biosynthesis; ADP-L-glycero-beta-D-manno-heptose from D-glycero-beta-D-manno-heptose 7-phosphate: step 3/4. Functionally, catalyzes the phosphorylation of D-glycero-D-manno-heptose 7-phosphate at the C-1 position to selectively form D-glycero-beta-D-manno-heptose-1,7-bisphosphate. Its function is as follows. Catalyzes the ADP transfer from ATP to D-glycero-beta-D-manno-heptose 1-phosphate, yielding ADP-D-glycero-beta-D-manno-heptose. This is Bifunctional protein HldE from Azotobacter vinelandii (strain DJ / ATCC BAA-1303).